The primary structure comprises 122 residues: UPF0102 protein VV1_0590 (122 aa).

This sequence belongs to the UPF0102 family.

This Vibrio vulnificus (strain CMCP6) protein is UPF0102 protein VV1_0590.